The sequence spans 937 residues: Protocadherin alpha-7 (937 aa).

The signal sequence occupies residues 1-29 (MVCPNGYDPGGRHLLLFIIILAAWEAGRG). Cadherin domains follow at residues 30–133 (QLHY…PPVF), 134–242 (PATQ…APVF), 243–350 (DRTL…APQL), 351–455 (TLTS…APAF), 456–565 (AQPE…APAL), and 581–678 (VPRS…APKA). Over 30–697 (QLHYSVPEEA…GPETELVDVN (668 aa)) the chain is Extracellular. The cysteines at positions 96 and 102 are disulfide-linked. Residues Asn254 and Asn265 are each glycosylated (N-linked (GlcNAc...) asparagine). Asn548 carries an N-linked (GlcNAc...) asparagine glycan. Residues 698–718 (VYLIIAICAVSSLLVLTLLLY) traverse the membrane as a helical segment. Residues 719–937 (TALRCSAPSS…GNSTTDNSDQ (219 aa)) are Cytoplasmic-facing. 2 disordered regions span residues 756–795 (QRVC…DWRY) and 817–843 (AGPG…EVSP). 5 PXXP repeats span residues 774-777 (PSLP), 786-789 (PRQP), 819-822 (PGGP), 860-863 (PGNP), and 878-881 (PGSP). Residues 774-881 (PSLPQGPSST…PDKFIIPGSP (108 aa)) are 5 X 4 AA repeats of P-X-X-P. Over residues 775 to 787 (SLPQGPSSTDNPR) the composition is skewed to polar residues. Residues 888-937 (QEPANSQIDKSDFITFGKKEETKKKKKKKKGNKTQEKKEKGNSTTDNSDQ) form a disordered region. Over residues 896 to 910 (DKSDFITFGKKEETK) the composition is skewed to basic and acidic residues.

In terms of assembly, forms homodimers in trans (molecules expressed by two different cells). Forms promiscuous heterodimers in cis (at the plasma membrane of the same cell) with other protocadherins.

The protein resides in the cell membrane. In terms of biological role, calcium-dependent cell-adhesion protein involved in cells self-recognition and non-self discrimination. Thereby, it is involved in the establishment and maintenance of specific neuronal connections in the brain. In Pan troglodytes (Chimpanzee), this protein is Protocadherin alpha-7.